Consider the following 81-residue polypeptide: 2,3-bisphosphoglycerate-independent phosphoglycerate mutase (81 aa).

Ser-14 acts as the Phosphoserine intermediate in catalysis. Ser-14 contacts Mn(2+). His-75 is a binding site for substrate.

It belongs to the BPG-independent phosphoglycerate mutase family. Monomer. Requires Mn(2+) as cofactor.

It catalyses the reaction (2R)-2-phosphoglycerate = (2R)-3-phosphoglycerate. It functions in the pathway carbohydrate degradation; glycolysis; pyruvate from D-glyceraldehyde 3-phosphate: step 3/5. Its function is as follows. Catalyzes the interconversion of 2-phosphoglycerate and 3-phosphoglycerate. The chain is 2,3-bisphosphoglycerate-independent phosphoglycerate mutase (gpmI) from Tomato big bud phytoplasma.